The sequence spans 165 residues: Cytochrome c-type biogenesis protein CcmE (165 aa).

At 1–29 (MSATAEDNARGAKPAGNFARTVSQRKRKR) the chain is on the cytoplasmic side. A helical; Signal-anchor for type II membrane protein transmembrane segment spans residues 30 to 50 (LFLIGGALAVLAVAVGLMLMA). Topologically, residues 51-165 (FSQDIRFFRT…LKEKGVWEGK (115 aa)) are periplasmic. Residues His143 and Tyr147 each contribute to the heme site.

The protein belongs to the CcmE/CycJ family.

The protein resides in the cell inner membrane. Functionally, heme chaperone required for the biogenesis of c-type cytochromes. Transiently binds heme delivered by CcmC and transfers the heme to apo-cytochromes in a process facilitated by CcmF and CcmH. The chain is Cytochrome c-type biogenesis protein CcmE from Brucella anthropi (strain ATCC 49188 / DSM 6882 / CCUG 24695 / JCM 21032 / LMG 3331 / NBRC 15819 / NCTC 12168 / Alc 37) (Ochrobactrum anthropi).